The sequence spans 208 residues: CASP-like protein 1D1 (208 aa).

The segment at 1 to 36 (MSSVDTEKPAPPPLETEAPPPPPPPPPPPPPPPPPP) is disordered. Residues 1–41 (MSSVDTEKPAPPPLETEAPPPPPPPPPPPPPPPPPPAGYSA) lie on the Cytoplasmic side of the membrane. The span at 9 to 36 (PAPPPLETEAPPPPPPPPPPPPPPPPPP) shows a compositional bias: pro residues. A helical membrane pass occupies residues 42 to 62 (LDVVLRILLLGSAVASVVVMV). Residues 63–89 (TSVQTKLIAVAGVPVLVSNKAKFQNSP) are Extracellular-facing. A helical transmembrane segment spans residues 90 to 110 (AFIYFVAALSVVGLYSIITTL). Residues 111–133 (ASFIFISKPSCSTKTILHLAIWD) are Cytoplasmic-facing. The chain crosses the membrane as a helical span at residues 134-154 (VLMLGLAASATGTAGGVAYVG). Over 155-180 (LKGNSHVGWNKVCNTYDKFCRHVGGS) the chain is Extracellular. A helical membrane pass occupies residues 181–201 (IAVALFASILLVLLVWLSLFT). Residues 202 to 208 (LYSRIRK) lie on the Cytoplasmic side of the membrane.

The protein belongs to the Casparian strip membrane proteins (CASP) family. In terms of assembly, homodimer and heterodimers.

The protein localises to the cell membrane. This is CASP-like protein 1D1 from Vitis vinifera (Grape).